The following is a 186-amino-acid chain: Peptidyl-tRNA hydrolase (186 aa).

The Proton acceptor role is filled by His19. Residues Phe64, Asn66, and Asn112 each contribute to the tRNA site.

The protein belongs to the PTH family. Monomer.

It localises to the cytoplasm. The enzyme catalyses an N-acyl-L-alpha-aminoacyl-tRNA + H2O = an N-acyl-L-amino acid + a tRNA + H(+). In terms of biological role, hydrolyzes ribosome-free peptidyl-tRNAs (with 1 or more amino acids incorporated), which drop off the ribosome during protein synthesis, or as a result of ribosome stalling. Catalyzes the release of premature peptidyl moieties from peptidyl-tRNA molecules trapped in stalled 50S ribosomal subunits, and thus maintains levels of free tRNAs and 50S ribosomes. The protein is Peptidyl-tRNA hydrolase of Pelagibacter ubique (strain HTCC1062).